A 383-amino-acid chain; its full sequence is Chitinase-3-like protein 1 (383 aa).

The signal sequence occupies residues 1–21 (MGLRASGTGFVVLVLLQSCAA). The 362-residue stretch at 22-383 (YKLICYYTSW…SAVKDVLAEV (362 aa)) folds into the GH18 domain. An intrachain disulfide couples C26 to C51. N60 carries N-linked (GlcNAc...) asparagine glycosylation. Residues 70–71 (EW), 97–100 (GGWN), Y141, 204–207 (LTYD), and R263 each bind chitin. A disulfide bond links C300 and C364. The segment at 324–338 (QWVAYDDQESVKNKA) is important for AKT1 activation and IL8 production. W352 provides a ligand contact to chitin. The N-linked (GlcNAc...) asparagine glycan is linked to N367.

This sequence belongs to the glycosyl hydrolase 18 family. As to quaternary structure, monomer.

The protein resides in the secreted. It is found in the extracellular space. It localises to the cytoplasm. Its subcellular location is the perinuclear region. The protein localises to the endoplasmic reticulum. Carbohydrate-binding lectin with a preference for chitin. Has no chitinase activity. May play a role in tissue remodeling and in the capacity of cells to respond to and cope with changes in their environment. Plays a role in T-helper cell type 2 (Th2) inflammatory response and IL-13-induced inflammation, regulating allergen sensitization, inflammatory cell apoptosis, dendritic cell accumulation and M2 macrophage differentiation. Facilitates invasion of pathogenic enteric bacteria into colonic mucosa and lymphoid organs. Mediates activation of AKT1 signaling pathway and subsequent IL8 production in colonic epithelial cells. Regulates antibacterial responses in lung by contributing to macrophage bacterial killing, controlling bacterial dissemination and augmenting host tolerance. Also regulates hyperoxia-induced injury, inflammation and epithelial apoptosis in lung. The polypeptide is Chitinase-3-like protein 1 (CHI3L1) (Capra hircus (Goat)).